The chain runs to 467 residues: tRNA-2-methylthio-N(6)-dimethylallyladenosine synthase (467 aa).

The disordered stretch occupies residues 1–20 (MSDDTTQIEPAMAQETSPRA). In terms of domain architecture, MTTase N-terminal spans 23 to 143 (RKVFVKTYGC…LPNALARVRG (121 aa)). The [4Fe-4S] cluster site is built by C32, C68, C106, C184, C188, and C191. One can recognise a Radical SAM core domain in the interval 170–402 (RKRGVSAFLT…QALLSAQQYA (233 aa)). A TRAM domain is found at 405–467 (DSMIGRKMDV…TNSLIAQKLA (63 aa)).

The protein belongs to the methylthiotransferase family. MiaB subfamily. As to quaternary structure, monomer. The cofactor is [4Fe-4S] cluster.

It is found in the cytoplasm. The enzyme catalyses N(6)-dimethylallyladenosine(37) in tRNA + (sulfur carrier)-SH + AH2 + 2 S-adenosyl-L-methionine = 2-methylsulfanyl-N(6)-dimethylallyladenosine(37) in tRNA + (sulfur carrier)-H + 5'-deoxyadenosine + L-methionine + A + S-adenosyl-L-homocysteine + 2 H(+). Functionally, catalyzes the methylthiolation of N6-(dimethylallyl)adenosine (i(6)A), leading to the formation of 2-methylthio-N6-(dimethylallyl)adenosine (ms(2)i(6)A) at position 37 in tRNAs that read codons beginning with uridine. The protein is tRNA-2-methylthio-N(6)-dimethylallyladenosine synthase of Brucella abortus (strain S19).